Consider the following 227-residue polypeptide: UPF0758 protein lpl2409 (227 aa).

Positions 102 to 225 (RLSNTQQTYA…YSIFAENKWA (124 aa)) constitute an MPN domain. Positions 173, 175, and 186 each coordinate Zn(2+). Positions 173–186 (HNHPSGLSDASQQD) match the JAMM motif motif.

The protein belongs to the UPF0758 family.

The polypeptide is UPF0758 protein lpl2409 (Legionella pneumophila (strain Lens)).